A 331-amino-acid polypeptide reads, in one-letter code: Mitochondrial carrier protein CoAc1 (331 aa).

The next 6 membrane-spanning stretches (helical) occupy residues 16 to 36, 79 to 99, 123 to 143, 193 to 213, 231 to 251, and 292 to 312; these read LVDT…AGAI, FYKG…LHYM, LVAG…LDLA, GIGP…YIYE, LPCG…LDVV, and FAGL…GFTV. 3 Solcar repeats span residues 21 to 107, 117 to 218, and 225 to 319; these read PVLA…YRDW, SGPI…LKRH, and NSVR…MKSW.

It belongs to the mitochondrial carrier (TC 2.A.29) family. In terms of tissue distribution, expressed throughout the plant.

Its subcellular location is the mitochondrion inner membrane. Its function is as follows. Required for the accumulation of coenzyme A in the mitochondrial matrix. This chain is Mitochondrial carrier protein CoAc1, found in Arabidopsis thaliana (Mouse-ear cress).